Reading from the N-terminus, the 307-residue chain is Ribosomal RNA small subunit methyltransferase H (307 aa).

Residues 33-35 (GGY), D51, F82, D96, and Q103 contribute to the S-adenosyl-L-methionine site.

This sequence belongs to the methyltransferase superfamily. RsmH family.

Its subcellular location is the cytoplasm. The enzyme catalyses cytidine(1402) in 16S rRNA + S-adenosyl-L-methionine = N(4)-methylcytidine(1402) in 16S rRNA + S-adenosyl-L-homocysteine + H(+). Specifically methylates the N4 position of cytidine in position 1402 (C1402) of 16S rRNA. The polypeptide is Ribosomal RNA small subunit methyltransferase H (Rickettsia africae (strain ESF-5)).